The chain runs to 110 residues: NADH-quinone oxidoreductase subunit K (110 aa).

The next 3 helical transmembrane spans lie at 13-33 (LNHYLILSSLVFTIGMFGLFM), 41-61 (ILMSIELMLLAVNINFVAFSI), and 73-93 (IIILTVAAAETSIGLAILLIY).

The protein belongs to the complex I subunit 4L family. In terms of assembly, NDH-1 is composed of 14 different subunits. Subunits NuoA, H, J, K, L, M, N constitute the membrane sector of the complex.

It localises to the cell inner membrane. It catalyses the reaction a quinone + NADH + 5 H(+)(in) = a quinol + NAD(+) + 4 H(+)(out). Functionally, NDH-1 shuttles electrons from NADH, via FMN and iron-sulfur (Fe-S) centers, to quinones in the respiratory chain. The immediate electron acceptor for the enzyme in this species is believed to be ubiquinone. Couples the redox reaction to proton translocation (for every two electrons transferred, four hydrogen ions are translocated across the cytoplasmic membrane), and thus conserves the redox energy in a proton gradient. This Rickettsia conorii (strain ATCC VR-613 / Malish 7) protein is NADH-quinone oxidoreductase subunit K.